Consider the following 335-residue polypeptide: Vitamin B12 import system permease protein BtuC (335 aa).

A run of 9 helical transmembrane segments spans residues 22–42 (LLLLTLGVAVAFVFSLSAGDV), 67–87 (LAVMLVGASLAVAGAVMQSLF), 94–114 (PGLLGVANGAGVALVLTVLLG), 117–137 (LLPVAFMSLSAIAGALVMTFL), 153–173 (LLVGVALGIVCSAVMTWAVYF), 200–220 (LVLALLPVLLWLCCQGKALNF), 243–263 (VLAIGWLVGVSVALAGVIGFV), 281–301 (YLLPGCALAGAGVLLAADVVA), and 308–328 (AELPIGVVTATLGAPLFIWLL).

This sequence belongs to the binding-protein-dependent transport system permease family. FecCD subfamily. The complex is composed of two ATP-binding proteins (BtuD), two transmembrane proteins (BtuC) and a solute-binding protein (BtuF).

The protein resides in the cell inner membrane. Its function is as follows. Part of the ABC transporter complex BtuCDF involved in vitamin B12 import. Involved in the translocation of the substrate across the membrane. The polypeptide is Vitamin B12 import system permease protein BtuC (Serratia proteamaculans (strain 568)).